We begin with the raw amino-acid sequence, 1177 residues long: Lysylphosphatidylglycerol biosynthesis bifunctional protein LysX (1177 aa).

Disordered stretches follow at residues 1 to 40 (MRRAGRSRQFSSVEEAFSTSAARPGRRGRRSGRENTAKFV) and 61 to 85 (VTLASPGSRSGSGPRSGPRLGPANR). The segment at 1-676 (MRRAGRSRQF…LLHHDGSAPD (676 aa)) is phosphatidylglycerol lysyltransferase. The segment covering 8–21 (RQFSSVEEAFSTSA) has biased composition (polar residues). Positions 65–82 (SPGSRSGSGPRSGPRLGP) are enriched in low complexity. The next 6 membrane-spanning stretches (helical) occupy residues 93 to 113 (VPAAAGWTVGVIATVSLLGSV), 135 to 155 (FPDTSIAWSFVLALLAAALTA), 159 to 179 (IAWLLLLGNMILAAALNVADI), 189 to 209 (IFGENLGFAVHIVAIVLLVLA), 227 to 247 (AVLVAGDVVGILVSWGLVELF), and 281 to 301 (VFLNAIFGLFGALALIMATIV). The tract at residues 673-693 (SAPDVSGLRPERTDAEEARSR) is disordered. Residues 677–1177 (VSGLRPERTD…TLPFPLAKPH (501 aa)) form a lysine--tRNA ligase region. Residues 681–693 (RPERTDAEEARSR) show a composition bias toward basic and acidic residues. Positions 1089 and 1096 each coordinate Mg(2+).

The protein in the N-terminal section; belongs to the LPG synthetase family. In the C-terminal section; belongs to the class-II aminoacyl-tRNA synthetase family. Mg(2+) is required as a cofactor.

It is found in the cell membrane. It carries out the reaction tRNA(Lys) + L-lysine + ATP = L-lysyl-tRNA(Lys) + AMP + diphosphate. It catalyses the reaction L-lysyl-tRNA(Lys) + a 1,2-diacyl-sn-glycero-3-phospho-(1'-sn-glycerol) = a 1,2-diacyl-sn-glycero-3-phospho-1'-(3'-O-L-lysyl)-sn-glycerol + tRNA(Lys). Catalyzes the production of L-lysyl-tRNA(Lys)transfer and the transfer of a lysyl group from L-lysyl-tRNA(Lys) to membrane-bound phosphatidylglycerol (PG), which produces lysylphosphatidylglycerol (LPG), one of the components of the bacterial membrane with a positive net charge. LPG synthesis contributes to the resistance to cationic antimicrobial peptides (CAMPs) and likely protects M.tuberculosis against the CAMPs produced by competiting microorganisms (bacteriocins). In fact, the modification of anionic phosphatidylglycerol with positively charged L-lysine results in repulsion of the peptides. The sequence is that of Lysylphosphatidylglycerol biosynthesis bifunctional protein LysX (lysX) from Mycobacterium avium (strain 104).